The primary structure comprises 199 residues: dITP/XTP pyrophosphatase (199 aa).

8–13 (SGNAGK) lines the substrate pocket. Asp69 acts as the Proton acceptor in catalysis. Residue Asp69 participates in Mg(2+) binding. Substrate is bound by residues Ser70, 154 to 157 (FGYN), Lys177, and 182 to 183 (HR).

It belongs to the HAM1 NTPase family. Homodimer. Mg(2+) serves as cofactor.

It carries out the reaction XTP + H2O = XMP + diphosphate + H(+). The catalysed reaction is dITP + H2O = dIMP + diphosphate + H(+). The enzyme catalyses ITP + H2O = IMP + diphosphate + H(+). In terms of biological role, pyrophosphatase that catalyzes the hydrolysis of nucleoside triphosphates to their monophosphate derivatives, with a high preference for the non-canonical purine nucleotides XTP (xanthosine triphosphate), dITP (deoxyinosine triphosphate) and ITP. Seems to function as a house-cleaning enzyme that removes non-canonical purine nucleotides from the nucleotide pool, thus preventing their incorporation into DNA/RNA and avoiding chromosomal lesions. The polypeptide is dITP/XTP pyrophosphatase (Xylella fastidiosa (strain 9a5c)).